We begin with the raw amino-acid sequence, 211 residues long: Beta-crystallin B3 (211 aa).

N-acetylmethionine is present on Met-1. Ala-2 carries the post-translational modification N-acetylalanine; in Beta-crystallin B3, N-terminally processed. Residues 2-23 (AEQHSTPEQAAAGKSHGGLGGS) form an N-terminal arm region. 2 Beta/gamma crystallin 'Greek key' domains span residues 24 to 63 (YKVI…QVES) and 64 to 108 (GPWL…RPLH). Residues 109–113 (IDGPD) form a connecting peptide region. 2 consecutive Beta/gamma crystallin 'Greek key' domains span residues 114–155 (HKLH…RAIN) and 156–198 (GTWV…RRIR). The C-terminal arm stretch occupies residues 200 to 211 (QKWHKRGVFLSS).

Belongs to the beta/gamma-crystallin family. In terms of assembly, homo/heterodimer, or complexes of higher-order. The structure of beta-crystallin oligomers seems to be stabilized through interactions between the N-terminal arms.

Its function is as follows. Crystallins are the dominant structural components of the vertebrate eye lens. The sequence is that of Beta-crystallin B3 (CRYBB3) from Bos taurus (Bovine).